A 630-amino-acid polypeptide reads, in one-letter code: MKEKHNPRRKYCLISGLAIIFSLWIIIGNGAKVQAETITVPTPIKQIFSDDAFAETIKDNLKKKSVTDAVTQNELNSIDQIIANNSDIKSVQGIQYLPNVTKLFLNGNKLTDIKPLANLKNLGWLFLDENKVKDLSSLKDLKKLKSLSLEHNGISDINGLVHLPQLESLYLGNNKITDITVLSRLTKLDTLSLEDNQISDIVPLAGLTKLQNLYLSKNHISDLRALAGLKNLDVLELFSQECLNKPINHQSNLVVPNTVKNTDGSLVTPEIISDDGDYEKPNVKWHLPEFTNEVSFIFYQPVTIGKAKARFHGRVTQPLKEVYTVSYDVDGTVIKTKVEAGTRITAPKPPTKQGYVFKGWYTEKNGGHEWNFNTDYMSGNDFTLYAVFKAETTEKAVNLTRYVKYIRGNAGIYKLPREDNSLKQGTLASHRCKALTVDREARNGGKLWYRLKNIGWTKAENLSLDRYDKMEYDKGVTAYARVRNASGNSVWTKPYNTAGAKHVNKLSVYQGKNMRILREAKTPITTWYQFSIGGKVIGWVDTRALNTFYKQSMEKPTRLTRYVSANKAGESYYKVPVADNPVKRGTLAKYKNQKLIVDCQATIEGQLWYRIRTSSTFIGWTKAANLRAQK.

The N-terminal stretch at 1-30 (MKEKHNPRRKYCLISGLAIIFSLWIIIGNG) is a signal peptide. In terms of domain architecture, LRRNT spans 31–76 (AKVQAETITVPTPIKQIFSDDAFAETIKDNLKKKSVTDAVTQNELN). LRR repeat units follow at residues 75–97 (LNSIDQIIANNSDIKSVQGIQYL), 98–121 (PNVTKLFLNGNKLTDIKPLANLKN), 123–141 (GWLFLDENKVKDLSSLKDL), 142–163 (KKLKSLSLEHNGISDINGLVHL), 164–187 (PQLESLYLGNNKITDITVLSRLTK), 189–207 (DTLSLEDNQISDIVPLAGL), and 208–231 (TKLQNLYLSKNHISDLRALAGLKN). The tract at residues 241-319 (ECLNKPINHQ…RFHGRVTQPL (79 aa)) is ig-like region. In terms of domain architecture, LRRCT spans 241–330 (ECLNKPINHQ…EVYTVSYDVD (90 aa)). The interval 320–392 (KEVYTVSYDV…TLYAVFKAET (73 aa)) is b repeat region. GW domains are found at residues 393-467 (TEKA…LDRY), 472-550 (YDKG…TFYK), and 553-630 (MEKP…RAQK). Residues 399–630 (LTRYVKYIRG…TKAANLRAQK (232 aa)) are GW repeat region, necessary and sufficient for cell surface attachment, interacts with host C1QBP and with heparin.

This sequence belongs to the internalin family. Interacts via its LRR repeats plus the Ig-like region with the extracellular portion (residues 25-741) of its receptor MET; MET can bind HGF, its endogenous ligand, and InlB simultaneously. Probably forms a dimer upon interaction with host MET, which subsequently allows dimerization of the host MET and subsequent host signaling; dimerization probably occurs via the convex surface of InlB. Prevention of dimerization does not block interaction with MET but prevents downstream action.

It is found in the secreted. Its subcellular location is the cytoplasm. It localises to the cell membrane. In terms of biological role, mediates the entry of L.monocytogenes into normally non-phagocytic mammalian host cells. Its host receptor is hepatocyte growth factor receptor (HGF receptor, a tyrosine kinase, MET) which is tyrosine-phosphorylated in response to InlB. Downstream targets MAPK1/MAPK3 (Erk1/2) and AKT are phosphorylated in response to InlB, which also causes cell colony scattering. Complement component 1 Q subcomponent-binding protein (gC1q-R, C1QBP) has been suggested to also act an InlB receptor, but this is less certain. Stimulation of Tyr-phosphorylation of MET by InlB is potentiated by the InlB GW domains and glycosaminoglycans such as heparin. The sequence is that of Internalin B (inlB) from Listeria monocytogenes serovar 1/2a (strain ATCC BAA-679 / EGD-e).